The following is a 1013-amino-acid chain: Probable ubiquitination network signaling protein acrB (1013 aa).

2 disordered regions span residues Met-1–Thr-65 and Gly-104–Ser-139. A compositionally biased stretch (polar residues) spans Asn-33–Asp-64. The next 3 helical transmembrane spans lie at Ile-159–Leu-179, Leu-212–Thr-232, and Ser-255–Ile-275. Disordered stretches follow at residues Ser-342 to Gln-367, Ser-574 to Leu-599, Gln-878 to Thr-906, and Leu-954 to Ile-1013. A coiled-coil region spans residues Thr-597–Leu-806. A compositionally biased stretch (gly residues) spans Ser-993–Ser-1002. Residues Gly-1003 to Ile-1013 show a composition bias toward low complexity.

Belongs to the acrB family.

Its subcellular location is the membrane. In terms of biological role, component of the regulatory network controlling carbon source utilization through ubiquitination and deubiquitination involving creA, creB, creC, creD and acrB. Involved in resistance to acriflavine, and required for normal growth on a range of sole carbon sources, including fructose, cellobiose, raffinose, and starch, and reduced utilization of amino acids, including GABA and beta-alanine, as sole carbon and nitrogen sources. This chain is Probable ubiquitination network signaling protein acrB (acrB), found in Aspergillus terreus (strain NIH 2624 / FGSC A1156).